Reading from the N-terminus, the 251-residue chain is Ribonuclease 3 (251 aa).

The 123-residue stretch at 3–125 folds into the RNase III domain; that stretch reads LATLETRLGH…LFGAVFLDAG (123 aa). Mg(2+) is bound at residue Glu38. Asp42 is an active-site residue. Mg(2+) contacts are provided by Asp111 and Glu114. Glu114 is an active-site residue. A DRBM domain is found at 152–222; the sequence is DAKTLLQEFL…AKLALEAALV (71 aa).

It belongs to the ribonuclease III family. In terms of assembly, homodimer. Mg(2+) serves as cofactor.

The protein resides in the cytoplasm. It carries out the reaction Endonucleolytic cleavage to 5'-phosphomonoester.. Functionally, digests double-stranded RNA. Involved in the processing of primary rRNA transcript to yield the immediate precursors to the large and small rRNAs (23S and 16S). Processes some mRNAs, and tRNAs when they are encoded in the rRNA operon. Processes pre-crRNA and tracrRNA of type II CRISPR loci if present in the organism. The sequence is that of Ribonuclease 3 from Bordetella avium (strain 197N).